The sequence spans 473 residues: 1-aminocyclopropane-1-carboxylate synthase (473 aa).

Substrate-binding positions include 84 to 85 (DY), Tyr145, and Asp151. Lys273 carries the post-translational modification N6-(pyridoxal phosphate)lysine.

The protein belongs to the class-I pyridoxal-phosphate-dependent aminotransferase family. In terms of assembly, homodimer. Requires pyridoxal 5'-phosphate as cofactor.

The enzyme catalyses S-adenosyl-L-methionine = 1-aminocyclopropane-1-carboxylate + S-methyl-5'-thioadenosine + H(+). It carries out the reaction (2S)-2-amino-3-butenoate + H2O = 2-oxobutanoate + NH4(+). The protein operates within alkene biosynthesis; ethylene biosynthesis via S-adenosyl-L-methionine; ethylene from S-adenosyl-L-methionine: step 1/2. Its activity is regulated as follows. Inhibited by L-aminoethoxyvinylglycine (AVG). Inhibited by L-vinylglycine (L-VG). Inhibited by S-methylmethionine through a L-VG ketimine intermediate. Catalyzes the formation of 1-aminocyclopropane-1-carboxylate, a direct precursor of ethylene in higher plants. Also catalyzes the conversion of L-vinylglycine (L-VG) to alpha-ketobutyrate and ammonia. Can use S-methylmethionine as substrate. This is 1-aminocyclopropane-1-carboxylate synthase from Malus domestica (Apple).